The chain runs to 295 residues: 4-hydroxy-tetrahydrodipicolinate synthase (295 aa).

Residue threonine 47 participates in pyruvate binding. The Proton donor/acceptor role is filled by tyrosine 135. Lysine 163 functions as the Schiff-base intermediate with substrate in the catalytic mechanism. Isoleucine 204 is a binding site for pyruvate.

The protein belongs to the DapA family. As to quaternary structure, homotetramer; dimer of dimers.

Its subcellular location is the cytoplasm. The catalysed reaction is L-aspartate 4-semialdehyde + pyruvate = (2S,4S)-4-hydroxy-2,3,4,5-tetrahydrodipicolinate + H2O + H(+). Its pathway is amino-acid biosynthesis; L-lysine biosynthesis via DAP pathway; (S)-tetrahydrodipicolinate from L-aspartate: step 3/4. Its function is as follows. Catalyzes the condensation of (S)-aspartate-beta-semialdehyde [(S)-ASA] and pyruvate to 4-hydroxy-tetrahydrodipicolinate (HTPA). This chain is 4-hydroxy-tetrahydrodipicolinate synthase, found in Caldicellulosiruptor bescii (strain ATCC BAA-1888 / DSM 6725 / KCTC 15123 / Z-1320) (Anaerocellum thermophilum).